Consider the following 144-residue polypeptide: Subtilase-type protease inhibitor (144 aa).

An N-terminal signal peptide occupies residues 1 to 35 (MRNTARWAATLGLTATAVCGPLAGASLASPATAPA). Disulfide bonds link Cys66/Cys81 and Cys102/Cys132.

Belongs to the protease inhibitor I16 (SSI) family. As to quaternary structure, homodimer.

Its subcellular location is the secreted. Functionally, strong inhibitory activity toward subtilisin BPN' and, to a lesser extent, toward trypsin. This Streptomyces coelicolor (strain ATCC BAA-471 / A3(2) / M145) protein is Subtilase-type protease inhibitor (sti1).